The following is a 367-amino-acid chain: MLLTINLKDSFLTFFSNLGFSNEFSKALWIPLPILLLIILAVVGVLVVVWLERKISAAVQQRIGPEYAGPLGVLQPLADGLKLAFKEDIIPSKGDVLLFTLGPAIVVIPIFLSYLIVPFGENLIVSNINLGIFFWITVSSVAPLGLLMSGYGSNNKYSFLGGLRATAQSLSYEIPLALCVLSICLLSDSLSTIDIVQKQSTYGILGWNIWRQPIGFIAFIIAALAECERLPFDLPEAEEELVAGYQTEYTGMKFGLFYIGSYVNLLVSALFASVLYLGGWSLPIPIEFLLNKMSLNASDSEVQVISAFLGIGMTLLKTYLFLFLSILTRWTMPRVRIDQLLDLGWKFLLPISLGNLLLTASLKIALL.

A run of 8 helical transmembrane segments spans residues 29 to 49 (WIPL…LVVV), 96 to 116 (VLLF…SYLI), 128 to 148 (INLG…GLLM), 176 to 196 (LALC…IDIV), 204 to 224 (ILGW…IAAL), 266 to 286 (LVSA…PIPI), 304 to 324 (VISA…FLFL), and 347 to 367 (FLLP…IALL).

Belongs to the complex I subunit 1 family. As to quaternary structure, NDH is composed of at least 16 different subunits, 5 of which are encoded in the nucleus.

Its subcellular location is the plastid. It is found in the chloroplast thylakoid membrane. It catalyses the reaction a plastoquinone + NADH + (n+1) H(+)(in) = a plastoquinol + NAD(+) + n H(+)(out). The enzyme catalyses a plastoquinone + NADPH + (n+1) H(+)(in) = a plastoquinol + NADP(+) + n H(+)(out). In terms of biological role, NDH shuttles electrons from NAD(P)H:plastoquinone, via FMN and iron-sulfur (Fe-S) centers, to quinones in the photosynthetic chain and possibly in a chloroplast respiratory chain. The immediate electron acceptor for the enzyme in this species is believed to be plastoquinone. Couples the redox reaction to proton translocation, and thus conserves the redox energy in a proton gradient. The protein is NAD(P)H-quinone oxidoreductase subunit 1, chloroplastic of Mesostigma viride (Green alga).